The sequence spans 469 residues: MHTPTLTSTPTTATSVVDDTAPAASGKKVYIRTFGCQMNEYDSDKMSDVMAAAEGYTPTDDPEQADLILFNTCSVREKAQEKVFSDLGRVKHLKARGVLIGVGGCVASQEGAAIIERAPYVDVVFGPQTLHRLPQMLAQRARQGRPQVDISFPEIEKFDHLPPAKVDGAAAFVSIMEGCSKYCSYCVVPYTRGEEFSRPFDEVLTEVAGLADQGVKEVTLLGQNVNAYRGRMGDTSDIADFATLLEYVHEIPGIERIRYTTSHPNEFTPALIEAYARLPKLVNHLHLPVQHGSDRILSGMKRGYTVLEYKSTIRKLRAIRPDISLSTDFIVGFPGETDDDHARTMKLIDDIGFDASFSFIFSPRPGTPAAALHDDTSYEVKLARLQQLQATIEDNVRRISERRVGTVQRVLVEGPSRRDPNELMGRTECNRIVNFDGGPNAARLVGRMIDIRITLAYPHSLRGEPVLRD.

Residues 27–142 form the MTTase N-terminal domain; sequence KKVYIRTFGC…LPQMLAQRAR (116 aa). [4Fe-4S] cluster is bound by residues cysteine 36, cysteine 73, cysteine 105, cysteine 179, cysteine 183, and cysteine 186. The Radical SAM core domain occupies 165 to 398; that stretch reads KVDGAAAFVS…QATIEDNVRR (234 aa). Residues 401-467 form the TRAM domain; it reads ERRVGTVQRV…PHSLRGEPVL (67 aa).

Belongs to the methylthiotransferase family. MiaB subfamily. As to quaternary structure, monomer. It depends on [4Fe-4S] cluster as a cofactor.

The protein resides in the cytoplasm. The catalysed reaction is N(6)-dimethylallyladenosine(37) in tRNA + (sulfur carrier)-SH + AH2 + 2 S-adenosyl-L-methionine = 2-methylsulfanyl-N(6)-dimethylallyladenosine(37) in tRNA + (sulfur carrier)-H + 5'-deoxyadenosine + L-methionine + A + S-adenosyl-L-homocysteine + 2 H(+). Its function is as follows. Catalyzes the methylthiolation of N6-(dimethylallyl)adenosine (i(6)A), leading to the formation of 2-methylthio-N6-(dimethylallyl)adenosine (ms(2)i(6)A) at position 37 in tRNAs that read codons beginning with uridine. The chain is tRNA-2-methylthio-N(6)-dimethylallyladenosine synthase from Leptothrix cholodnii (strain ATCC 51168 / LMG 8142 / SP-6) (Leptothrix discophora (strain SP-6)).